The sequence spans 549 residues: Oxygen-dependent choline dehydrogenase (549 aa).

An FAD-binding site is contributed by 4 to 33 (DFVIIGSGSAGSAMAYRLSENGRYSVIVIE). His465 serves as the catalytic Proton acceptor.

Belongs to the GMC oxidoreductase family. Requires FAD as cofactor.

The catalysed reaction is choline + A = betaine aldehyde + AH2. The enzyme catalyses betaine aldehyde + NAD(+) + H2O = glycine betaine + NADH + 2 H(+). The protein operates within amine and polyamine biosynthesis; betaine biosynthesis via choline pathway; betaine aldehyde from choline (cytochrome c reductase route): step 1/1. Its function is as follows. Involved in the biosynthesis of the osmoprotectant glycine betaine. Catalyzes the oxidation of choline to betaine aldehyde and betaine aldehyde to glycine betaine at the same rate. The polypeptide is Oxygen-dependent choline dehydrogenase (Brucella suis biovar 1 (strain 1330)).